We begin with the raw amino-acid sequence, 147 residues long: Small ribosomal subunit protein uS12 (147 aa).

The protein belongs to the universal ribosomal protein uS12 family. Part of the 30S ribosomal subunit.

Its function is as follows. With S4 and S5 plays an important role in translational accuracy. Located at the interface of the 30S and 50S subunits. The sequence is that of Small ribosomal subunit protein uS12 from Methanococcus vannielii (strain ATCC 35089 / DSM 1224 / JCM 13029 / OCM 148 / SB).